The primary structure comprises 511 residues: Rab proteins geranylgeranyltransferase component A (511 aa).

Belongs to the Rab GDI family.

It is found in the cytoplasm. Its subcellular location is the perinuclear region. The protein localises to the cytoskeleton. It localises to the spindle pole. Its function is as follows. Binds unprenylated Rab proteins, presents it to the catalytic component B, and remains bound to it after the geranylgeranyl transfer reaction. The component A is thought to be regenerated by transferring its prenylated Rab to a protein acceptor. The protein is Rab proteins geranylgeranyltransferase component A of Drosophila melanogaster (Fruit fly).